A 155-amino-acid polypeptide reads, in one-letter code: MRSGVRLGIDVGTVRIGVSCSDLHGTLATPYETVARSGDAADRRRIAEIVTDLGVVEIIVGLPLALSGVHTASTADAVAFAEALVVEVGAPVRLVDERLSTVSAHSALRSSGKNAKSSRPVVDQAAATIILQHALDAERATSRPPGHPVEPRIGP.

The segment at 136–155 is disordered; that stretch reads DAERATSRPPGHPVEPRIGP.

Belongs to the YqgF nuclease family.

The protein localises to the cytoplasm. Functionally, could be a nuclease involved in processing of the 5'-end of pre-16S rRNA. This Leifsonia xyli subsp. xyli (strain CTCB07) protein is Putative pre-16S rRNA nuclease.